The primary structure comprises 153 residues: Prostaglandin E synthase (153 aa).

Residues 1-13 (MPSPGLVMESGQV) lie on the Lumenal side of the membrane. A helical membrane pass occupies residues 14-42 (LPAFLLCSTLLVIKMYAVAVITGQMRLRK). Arg-39 is a glutathione binding site. Topologically, residues 43–61 (KAFANPEDALKRGGLQYYR) are cytoplasmic. Residues 62–91 (SDPDVERCLRAHRNDMETIYPFLFLGFVYS) traverse the membrane as a helical segment. 74–78 (RNDME) is a binding site for glutathione. Topologically, residues 92–96 (FLGPN) are lumenal. The chain crosses the membrane as a helical span at residues 97–120 (PLIAWIHFLVVLTGRVVHTVAYLG). 2 residues coordinate glutathione: His-114 and Tyr-118. Over 121 to 124 (KLNP) the chain is Cytoplasmic. A helical membrane pass occupies residues 125-153 (RLRSGAYVLAQFSCFSMALQILWEVAHHL). 127 to 131 (RSGAY) contacts glutathione.

It belongs to the MAPEG family. As to quaternary structure, homotrimer. It depends on glutathione as a cofactor.

It is found in the membrane. It localises to the cytoplasm. Its subcellular location is the perinuclear region. It carries out the reaction prostaglandin H2 = prostaglandin E2. The catalysed reaction is 2-glyceryl-prostaglandin H2 = 2-glyceryl-prostaglandin E2. It catalyses the reaction prostaglandin G2 = (15S)-15-hydroperoxy-prostaglandin E2. The enzyme catalyses 1-chloro-2,4-dinitrobenzene + glutathione = 2,4-dinitrophenyl-S-glutathione + chloride + H(+). It carries out the reaction (5S)-hydroperoxy-(6E,8Z,11Z,14Z)-eicosatetraenoate + 2 glutathione = (5S)-hydroxy-(6E,8Z,11Z,14Z)-eicosatetraenoate + glutathione disulfide + H2O. Its pathway is lipid metabolism; prostaglandin biosynthesis. Activity is increased markedly in macrophages and osteoblasts following pro-inflammatory stimuli. Terminal enzyme of the cyclooxygenase (COX)-2-mediated prostaglandin E2 (PGE2) biosynthetic pathway. Catalyzes the glutathione-dependent oxidoreduction of prostaglandin endoperoxide H2 (PGH2) to prostaglandin E2 (PGE2) in response to inflammatory stimuli. Plays a key role in inflammation response, fever and pain. Also catalyzes the oxidoreduction of endocannabinoids into prostaglandin glycerol esters and PGG2 into 15-hydroperoxy-PGE2. In addition, displays low glutathione transferase and glutathione-dependent peroxidase activities, toward 1-chloro-2,4-dinitrobenzene and 5-hydroperoxyicosatetraenoic acid (5-HPETE), respectively. This Mus musculus (Mouse) protein is Prostaglandin E synthase (Ptges).